The chain runs to 179 residues: Large ribosomal subunit protein uL5 (179 aa).

It belongs to the universal ribosomal protein uL5 family. As to quaternary structure, part of the 50S ribosomal subunit; part of the 5S rRNA/L5/L18/L25 subcomplex. Contacts the 5S rRNA and the P site tRNA. Forms a bridge to the 30S subunit in the 70S ribosome.

In terms of biological role, this is one of the proteins that bind and probably mediate the attachment of the 5S RNA into the large ribosomal subunit, where it forms part of the central protuberance. In the 70S ribosome it contacts protein S13 of the 30S subunit (bridge B1b), connecting the 2 subunits; this bridge is implicated in subunit movement. Contacts the P site tRNA; the 5S rRNA and some of its associated proteins might help stabilize positioning of ribosome-bound tRNAs. This Xylella fastidiosa (strain M23) protein is Large ribosomal subunit protein uL5.